Consider the following 127-residue polypeptide: MCPGGKAPRKQLATKAARKNAIVVGAVKKPHRFRPGTVALREIRRYQKSTDLLLRKLPFQRLVREIAQDVKQDLRFQSAAIQALQEASEYFLVGLFEDTNLCAIHAKRVTIMPKDMQLARRIRGERN.

An N6-acetyllysine mark is found at K6 and K15. An N6-methylated lysine mark is found at K19, K28, and K71.

Belongs to the histone H3 family. In terms of assembly, the nucleosome is a histone octamer containing two molecules each of H2A, H2B, H3 and H4 assembled in one H3-H4 heterotetramer and two H2A-H2B heterodimers. The octamer wraps approximately 147 bp of DNA. Post-translationally, acetylation is generally linked to gene activation.

The protein resides in the nucleus. The protein localises to the chromosome. In terms of biological role, putative variant histone H3 which may replace conventional H3 in a subset of nucleosomes. Nucleosomes wrap and compact DNA into chromatin, limiting DNA accessibility to the cellular machineries which require DNA as a template. Histones thereby play a central role in transcription regulation, DNA repair, DNA replication and chromosomal stability. DNA accessibility is regulated via a complex set of post-translational modifications of histones, also called histone code, and nucleosome remodeling. The protein is Putative histone H3.3-like type 3 (his-69) of Caenorhabditis elegans.